We begin with the raw amino-acid sequence, 276 residues long: Large ribosomal subunit protein uL2 (276 aa).

Residues 219–276 (TVRGSVMNPNDHPHGGGEGRSPIGRPSPVTPWGKPALGYKTRKKNKASNKLIVSRRTK) form a disordered region. Over residues 258 to 276 (KTRKKNKASNKLIVSRRTK) the composition is skewed to basic residues.

Belongs to the universal ribosomal protein uL2 family. In terms of assembly, part of the 50S ribosomal subunit. Forms a bridge to the 30S subunit in the 70S ribosome.

In terms of biological role, one of the primary rRNA binding proteins. Required for association of the 30S and 50S subunits to form the 70S ribosome, for tRNA binding and peptide bond formation. It has been suggested to have peptidyltransferase activity; this is somewhat controversial. Makes several contacts with the 16S rRNA in the 70S ribosome. This is Large ribosomal subunit protein uL2 from Clostridioides difficile (strain 630) (Peptoclostridium difficile).